The primary structure comprises 442 residues: 3-phosphoshikimate 1-carboxyvinyltransferase (442 aa).

3-phosphoshikimate-binding residues include lysine 25, serine 26, and arginine 30. Lysine 25 is a binding site for phosphoenolpyruvate. Phosphoenolpyruvate contacts are provided by glycine 96 and arginine 124. 3-phosphoshikimate-binding residues include serine 171, serine 172, glutamine 173, serine 203, aspartate 325, and lysine 352. Glutamine 173 contacts phosphoenolpyruvate. Aspartate 325 acts as the Proton acceptor in catalysis. Residues arginine 356, arginine 400, and lysine 425 each coordinate phosphoenolpyruvate.

Belongs to the EPSP synthase family. In terms of assembly, monomer.

The protein resides in the cytoplasm. It carries out the reaction 3-phosphoshikimate + phosphoenolpyruvate = 5-O-(1-carboxyvinyl)-3-phosphoshikimate + phosphate. It functions in the pathway metabolic intermediate biosynthesis; chorismate biosynthesis; chorismate from D-erythrose 4-phosphate and phosphoenolpyruvate: step 6/7. Functionally, catalyzes the transfer of the enolpyruvyl moiety of phosphoenolpyruvate (PEP) to the 5-hydroxyl of shikimate-3-phosphate (S3P) to produce enolpyruvyl shikimate-3-phosphate and inorganic phosphate. This Bordetella pertussis (strain Tohama I / ATCC BAA-589 / NCTC 13251) protein is 3-phosphoshikimate 1-carboxyvinyltransferase.